Here is a 318-residue protein sequence, read N- to C-terminus: tRNA-cytidine(32) 2-sulfurtransferase (318 aa).

Residues 52–57 carry the PP-loop motif motif; it reads SGGKDS. Residues cysteine 127, cysteine 130, and cysteine 218 each contribute to the [4Fe-4S] cluster site.

Belongs to the TtcA family. In terms of assembly, homodimer. Requires Mg(2+) as cofactor. It depends on [4Fe-4S] cluster as a cofactor.

The protein resides in the cytoplasm. The catalysed reaction is cytidine(32) in tRNA + S-sulfanyl-L-cysteinyl-[cysteine desulfurase] + AH2 + ATP = 2-thiocytidine(32) in tRNA + L-cysteinyl-[cysteine desulfurase] + A + AMP + diphosphate + H(+). Its pathway is tRNA modification. Its function is as follows. Catalyzes the ATP-dependent 2-thiolation of cytidine in position 32 of tRNA, to form 2-thiocytidine (s(2)C32). The sulfur atoms are provided by the cysteine/cysteine desulfurase (IscS) system. The protein is tRNA-cytidine(32) 2-sulfurtransferase of Actinobacillus pleuropneumoniae serotype 3 (strain JL03).